Reading from the N-terminus, the 67-residue chain is Ubiquitin-like protein 5 (67 aa).

In terms of domain architecture, Ubiquitin-like spans 2–67 (IEVVCNDRLG…DGDGLELYYN (66 aa)).

It localises to the cytoplasm. In Dictyostelium discoideum (Social amoeba), this protein is Ubiquitin-like protein 5 (ubl5).